The sequence spans 947 residues: Bifunctional glutamine synthetase adenylyltransferase/adenylyl-removing enzyme (947 aa).

Residues 1-440 (MTPLSSPLSQ…VFNELIGDDE (440 aa)) form an adenylyl removase region. Residues 450-947 (SEPWREVWQD…ASWRKWLVAV (498 aa)) form an adenylyl transferase region.

This sequence belongs to the GlnE family. Mg(2+) serves as cofactor.

The enzyme catalyses [glutamine synthetase]-O(4)-(5'-adenylyl)-L-tyrosine + phosphate = [glutamine synthetase]-L-tyrosine + ADP. It carries out the reaction [glutamine synthetase]-L-tyrosine + ATP = [glutamine synthetase]-O(4)-(5'-adenylyl)-L-tyrosine + diphosphate. In terms of biological role, involved in the regulation of glutamine synthetase GlnA, a key enzyme in the process to assimilate ammonia. When cellular nitrogen levels are high, the C-terminal adenylyl transferase (AT) inactivates GlnA by covalent transfer of an adenylyl group from ATP to specific tyrosine residue of GlnA, thus reducing its activity. Conversely, when nitrogen levels are low, the N-terminal adenylyl removase (AR) activates GlnA by removing the adenylyl group by phosphorolysis, increasing its activity. The regulatory region of GlnE binds the signal transduction protein PII (GlnB) which indicates the nitrogen status of the cell. This is Bifunctional glutamine synthetase adenylyltransferase/adenylyl-removing enzyme from Salmonella typhimurium (strain LT2 / SGSC1412 / ATCC 700720).